The chain runs to 23 residues: Conotoxin Cl6c (23 aa).

3 disulfide bridges follow: C2-C12, C5-C17, and C11-C21.

As to expression, expressed by the venom duct.

Its subcellular location is the secreted. This chain is Conotoxin Cl6c, found in Californiconus californicus (California cone).